Reading from the N-terminus, the 316-residue chain is 4-hydroxy-3-methylbut-2-enyl diphosphate reductase (316 aa).

Cys12 is a binding site for [4Fe-4S] cluster. Residues His41 and His74 each contribute to the (2E)-4-hydroxy-3-methylbut-2-enyl diphosphate site. Dimethylallyl diphosphate contacts are provided by His41 and His74. Isopentenyl diphosphate contacts are provided by His41 and His74. Residue Cys96 coordinates [4Fe-4S] cluster. His124 lines the (2E)-4-hydroxy-3-methylbut-2-enyl diphosphate pocket. His124 contacts dimethylallyl diphosphate. An isopentenyl diphosphate-binding site is contributed by His124. Glu126 (proton donor) is an active-site residue. Thr169 contacts (2E)-4-hydroxy-3-methylbut-2-enyl diphosphate. Cys199 is a [4Fe-4S] cluster binding site. Residues Ser227, Ser228, Asn229, and Ser271 each coordinate (2E)-4-hydroxy-3-methylbut-2-enyl diphosphate. 4 residues coordinate dimethylallyl diphosphate: Ser227, Ser228, Asn229, and Ser271. Isopentenyl diphosphate-binding residues include Ser227, Ser228, Asn229, and Ser271.

The protein belongs to the IspH family. [4Fe-4S] cluster serves as cofactor.

The catalysed reaction is isopentenyl diphosphate + 2 oxidized [2Fe-2S]-[ferredoxin] + H2O = (2E)-4-hydroxy-3-methylbut-2-enyl diphosphate + 2 reduced [2Fe-2S]-[ferredoxin] + 2 H(+). It carries out the reaction dimethylallyl diphosphate + 2 oxidized [2Fe-2S]-[ferredoxin] + H2O = (2E)-4-hydroxy-3-methylbut-2-enyl diphosphate + 2 reduced [2Fe-2S]-[ferredoxin] + 2 H(+). The protein operates within isoprenoid biosynthesis; dimethylallyl diphosphate biosynthesis; dimethylallyl diphosphate from (2E)-4-hydroxy-3-methylbutenyl diphosphate: step 1/1. It participates in isoprenoid biosynthesis; isopentenyl diphosphate biosynthesis via DXP pathway; isopentenyl diphosphate from 1-deoxy-D-xylulose 5-phosphate: step 6/6. Its function is as follows. Catalyzes the conversion of 1-hydroxy-2-methyl-2-(E)-butenyl 4-diphosphate (HMBPP) into a mixture of isopentenyl diphosphate (IPP) and dimethylallyl diphosphate (DMAPP). Acts in the terminal step of the DOXP/MEP pathway for isoprenoid precursor biosynthesis. This chain is 4-hydroxy-3-methylbut-2-enyl diphosphate reductase, found in Stenotrophomonas maltophilia (strain R551-3).